A 317-amino-acid polypeptide reads, in one-letter code: Acetyl-coenzyme A carboxylase carboxyl transferase subunit alpha (317 aa).

The CoA carboxyltransferase C-terminal domain occupies Leu40–Ser293.

This sequence belongs to the AccA family. Acetyl-CoA carboxylase is a heterohexamer composed of biotin carboxyl carrier protein (AccB), biotin carboxylase (AccC) and two subunits each of ACCase subunit alpha (AccA) and ACCase subunit beta (AccD).

The protein resides in the cytoplasm. It carries out the reaction N(6)-carboxybiotinyl-L-lysyl-[protein] + acetyl-CoA = N(6)-biotinyl-L-lysyl-[protein] + malonyl-CoA. It participates in lipid metabolism; malonyl-CoA biosynthesis; malonyl-CoA from acetyl-CoA: step 1/1. Its function is as follows. Component of the acetyl coenzyme A carboxylase (ACC) complex. First, biotin carboxylase catalyzes the carboxylation of biotin on its carrier protein (BCCP) and then the CO(2) group is transferred by the carboxyltransferase to acetyl-CoA to form malonyl-CoA. In Brucella anthropi (strain ATCC 49188 / DSM 6882 / CCUG 24695 / JCM 21032 / LMG 3331 / NBRC 15819 / NCTC 12168 / Alc 37) (Ochrobactrum anthropi), this protein is Acetyl-coenzyme A carboxylase carboxyl transferase subunit alpha.